We begin with the raw amino-acid sequence, 465 residues long: Kynureninase (465 aa).

Pyridoxal 5'-phosphate is bound by residues leucine 116, threonine 117, 144–147 (FPSD), aspartate 231, histidine 234, and tyrosine 256. Residue lysine 257 is modified to N6-(pyridoxal phosphate)lysine. Pyridoxal 5'-phosphate-binding residues include tryptophan 291 and asparagine 319.

This sequence belongs to the kynureninase family. As to quaternary structure, homodimer. It depends on pyridoxal 5'-phosphate as a cofactor.

Its subcellular location is the cytoplasm. The catalysed reaction is L-kynurenine + H2O = anthranilate + L-alanine + H(+). It carries out the reaction 3-hydroxy-L-kynurenine + H2O = 3-hydroxyanthranilate + L-alanine + H(+). It participates in amino-acid degradation; L-kynurenine degradation; L-alanine and anthranilate from L-kynurenine: step 1/1. The protein operates within cofactor biosynthesis; NAD(+) biosynthesis; quinolinate from L-kynurenine: step 2/3. In terms of biological role, catalyzes the cleavage of L-kynurenine (L-Kyn) and L-3-hydroxykynurenine (L-3OHKyn) into anthranilic acid (AA) and 3-hydroxyanthranilic acid (3-OHAA), respectively. The protein is Kynureninase of Scheffersomyces stipitis (strain ATCC 58785 / CBS 6054 / NBRC 10063 / NRRL Y-11545) (Yeast).